Here is a 194-residue protein sequence, read N- to C-terminus: Dof zinc finger protein DOF4.2 (194 aa).

The Dof-type zinc finger occupies 21–75 (RVCPRCYSDQTRFSYFNNNKKSQPRYKCKNCCRCWTHGGVLRNIPVTGICDKSNL). 4 residues coordinate Zn(2+): C23, C26, C48, and C51.

It is found in the nucleus. Functionally, transcription factor that binds specifically to a 5'-AA[AG]G-3' consensus core sequence. The sequence is that of Dof zinc finger protein DOF4.2 (DOF4.2) from Arabidopsis thaliana (Mouse-ear cress).